The chain runs to 542 residues: Probable protein kinase UbiB (542 aa).

A Protein kinase domain is found at D123 to M505. ATP-binding positions include L129 to V137 and K156. The active-site Proton acceptor is the D291. Residues I506–L526 form a helical membrane-spanning segment.

The protein belongs to the ABC1 family. UbiB subfamily.

It localises to the cell inner membrane. Its pathway is cofactor biosynthesis; ubiquinone biosynthesis [regulation]. Its function is as follows. Is probably a protein kinase regulator of UbiI activity which is involved in aerobic coenzyme Q (ubiquinone) biosynthesis. This Haemophilus ducreyi (strain 35000HP / ATCC 700724) protein is Probable protein kinase UbiB.